The primary structure comprises 760 residues: MOXD1 homolog 2 (760 aa).

The segment at 1-34 is disordered; it reads MAHPRKAVATPATLQLGPPAQTAQSPAATLRHSR. Low complexity predominate over residues 18 to 34; that stretch reads PPAQTAQSPAATLRHSR. A helical membrane pass occupies residues 47 to 67; sequence CFISCHTFNLFLLLLLLASGV. N-linked (GlcNAc...) asparagine glycosylation is found at asparagine 78, asparagine 198, and asparagine 223. One can recognise a DOMON domain in the interval 117 to 233; it reads DDFRILWQII…DTMRLLYMYH (117 aa). Disulfide bonds link cysteine 339–cysteine 367, cysteine 467–cysteine 581, and cysteine 543–cysteine 565. A glycan (N-linked (GlcNAc...) asparagine) is linked at asparagine 668. Residues 678–701 are disordered; that stretch reads RCKPKRPLAPPTERTAPPPASDLS. The helical transmembrane segment at 740-760 threads the bilayer; the sequence is FISCLLWLGASSWWLLLMLRT.

This sequence belongs to the copper type II ascorbate-dependent monooxygenase family.

It is found in the membrane. The polypeptide is MOXD1 homolog 2 (olf413) (Drosophila melanogaster (Fruit fly)).